The primary structure comprises 747 residues: Protein FAM83C (747 aa).

The interval 1-309 is DUF1669; that stretch reads MFGGPGPGVL…LYAESQPVEG (309 aa). Disordered regions lie at residues 322-352, 374-412, 462-484, 517-550, 588-633, 646-672, and 692-715; these read LRPPPVALAFRPDVPSPTSSLPSSTSLSSIK, TGVVSSSLGPARREASGQPSLHRQLSDPNHGSPPGLYRA, LSRFPENGLPGSQEPSPLRGRWV, AREVGDPDSGVTPNSGPLRPGEQAPEDRRLSPSQ, NQSR…LGHS, GEGPGPNGLPISSPARTAGAGSGDEKR, and ARQGTEPGGPKGGHLNGGNSDLVR. The segment covering 328 to 350 has biased composition (low complexity); that stretch reads ALAFRPDVPSPTSSLPSSTSLSS. The segment covering 390–402 has biased composition (polar residues); the sequence is GQPSLHRQLSDPN. Over residues 697 to 707 the composition is skewed to gly residues; the sequence is EPGGPKGGHLN.

This sequence belongs to the FAM83 family. As to quaternary structure, may interact with RAF1. In terms of processing, phosphorylated in vitro by CSNK1A1.

The protein resides in the cytoplasm. Its function is as follows. May play a role in MAPK signaling. This chain is Protein FAM83C, found in Homo sapiens (Human).